Reading from the N-terminus, the 1134-residue chain is Ankyrin repeat and SAM domain-containing protein 1A (1134 aa).

Gly2 carries the post-translational modification N-acetylglycine. Gly residues predominate over residues 33–55; sequence GGGGGGGSGGGGGGSGGGGGGLG. Positions 33-57 are disordered; it reads GGGGGGGSGGGGGGSGGGGGGLGSS. ANK repeat units follow at residues 79–108, 112–141, 148–177, 181–210, 214–243, and 246–275; these read TGYTPLHHAALNGHKDVVEVLLRNDALTNV, KGCYPLHLAAWKGDAQIVRLLIHQGPSHTR, DNETALHCAAQYGHTEVVKVLLEELTDPTM, KFETPLDLAALYGRLEVVKMLLNAHPNLLS, KKHTPLHLAARNGHKAVVQVLLDAGMDSNY, and EMGSALHEAALFGKTDVVQILLAAGTDVNI. The segment covering 305 to 317 has biased composition (basic and acidic residues); sequence HMTGKRSTKEVDK. 3 disordered regions span residues 305–338, 375–422, and 469–498; these read HMTGKRSTKEVDKTPPPQPPLISSMDSISQKSQG, SMAS…EEDH, and VDGKTKDHRRSSSSRSQDSAEGQDGQVPEQ. The residue at position 318 (Thr318) is a Phosphothreonine. Positions 328–337 are enriched in polar residues; that stretch reads SMDSISQKSQ. A compositionally biased stretch (basic and acidic residues) spans 382–392; it reads SDQDSTNKEAE. At Ser507 the chain carries Phosphoserine. Residues 569–650 are disordered; the sequence is LTGLPTTNSR…MGSRSESLSN (82 aa). Over residues 572-588 the composition is skewed to polar residues; it reads LPTTNSRSHPETLTHTA. Residues 613–628 show a composition bias toward basic and acidic residues; the sequence is PKAELKLSRSLSKSDS. A phosphoserine mark is found at Ser620, Ser622, Ser624, Ser626, Ser628, Ser647, Ser661, Ser663, Ser666, and Ser677. Positions 633 to 650 are enriched in polar residues; that stretch reads CSPTEDATMGSRSESLSN. 2 consecutive SAM domains span residues 696-762 and 770-837; these read TLEQ…LPKV and NSPP…YEEP. Residues 856 to 868 are compositionally biased toward polar residues; the sequence is TSSPLSQNDSCTG. Disordered stretches follow at residues 856–896 and 1079–1134; these read TSSP…APSR and AEMI…LSTN. Ser887 is modified (phosphoserine). A PID domain is found at 936–1091; that stretch reads IFESCGYEAN…IETKSSKPVP (156 aa). Over residues 1123-1134 the composition is skewed to basic and acidic residues; it reads PKPDSKRSLSTN.

As to quaternary structure, interacts (via SAM domain) with EPHA2 (via SAM domain). Interacts with EPHA8; EPHA8 kinase activity-independent but stimulated by EPHA8 ubiquitination. Interacts (via SAM domain) with EPHA6 (via SAM domain). Phosphorylated on tyrosine residues in response to EGF and PDGF. In terms of tissue distribution, widely expressed (at protein level).

The protein localises to the cytoplasm. The protein resides in the cell projection. Functionally, regulator of different signaling pathways. Regulates EPHA8 receptor tyrosine kinase signaling to control cell migration and neurite retraction. This Homo sapiens (Human) protein is Ankyrin repeat and SAM domain-containing protein 1A (ANKS1A).